The sequence spans 117 residues: Aspartate 1-decarboxylase (117 aa).

The active-site Schiff-base intermediate with substrate; via pyruvic acid is Ser-25. A Pyruvic acid (Ser) modification is found at Ser-25. Thr-57 provides a ligand contact to substrate. Residue Tyr-58 is the Proton donor of the active site. A substrate-binding site is contributed by 73–75 (GAA).

Belongs to the PanD family. As to quaternary structure, heterooctamer of four alpha and four beta subunits. The cofactor is pyruvate. Post-translationally, is synthesized initially as an inactive proenzyme, which is activated by self-cleavage at a specific serine bond to produce a beta-subunit with a hydroxyl group at its C-terminus and an alpha-subunit with a pyruvoyl group at its N-terminus.

Its subcellular location is the cytoplasm. It catalyses the reaction L-aspartate + H(+) = beta-alanine + CO2. Its pathway is cofactor biosynthesis; (R)-pantothenate biosynthesis; beta-alanine from L-aspartate: step 1/1. Functionally, catalyzes the pyruvoyl-dependent decarboxylation of aspartate to produce beta-alanine. The sequence is that of Aspartate 1-decarboxylase from Thermoanaerobacter pseudethanolicus (strain ATCC 33223 / 39E) (Clostridium thermohydrosulfuricum).